A 166-amino-acid polypeptide reads, in one-letter code: MARKVIALAFLLLLTISLSKSNAARVIKYNGGESGGGGGGGGGGGGGGNGSGSGSGYGYNYGKGGGQSGGGQGSGGGGGGGGGGSNGSGSGSGYGYGYGQGNGGAQGQGSGGGGGGGGGGGGGGSGQGSGSGYGYGYGKGGGGGGGGGGDGGGGGGGGSAYVGRHE.

An N-terminal signal peptide occupies residues 1 to 23 (MARKVIALAFLLLLTISLSKSNA). R2; Tyr-rich repeat units lie at residues 56–62 (GYGYNYG) and 93–99 (GYGYGYG). The segment at 105-125 (AQGQGSGGGGGGGGGGGGGGS) is disordered. An R2; Tyr-rich repeat occupies 132 to 138 (GYGYGYG). A compositionally biased stretch (gly residues) spans 144 to 160 (GGGGGGDGGGGGGGGSA). Positions 144-166 (GGGGGGDGGGGGGGGSAYVGRHE) are disordered.

Its subcellular location is the secreted. The protein localises to the cell wall. In terms of biological role, responsible for plasticity of the cell wall. The sequence is that of Putative glycine-rich cell wall structural protein 1 (GRP-1) from Oryza sativa subsp. japonica (Rice).